A 124-amino-acid chain; its full sequence is Protein YobA (124 aa).

The signal sequence occupies residues 1 to 26 (MASTARSLRYALAILTTSLVTPSVWA). Residues H27 and H113 each coordinate Cu cation.

Belongs to the CopC family.

It is found in the periplasm. This Escherichia coli O6:H1 (strain CFT073 / ATCC 700928 / UPEC) protein is Protein YobA (yobA).